A 388-amino-acid polypeptide reads, in one-letter code: Succinate--CoA ligase [ADP-forming] subunit beta (388 aa).

Residues 9-244 enclose the ATP-grasp domain; sequence KALFAEYGLP…PSQDDAREAH (236 aa). ATP contacts are provided by residues Lys-46, 53–55, Glu-99, Thr-102, and Glu-107; that span reads GRG. Residues Asn-199 and Asp-213 each coordinate Mg(2+). Residues Asn-264 and 321–323 each bind substrate; that span reads GIV.

Belongs to the succinate/malate CoA ligase beta subunit family. As to quaternary structure, heterotetramer of two alpha and two beta subunits. It depends on Mg(2+) as a cofactor.

It catalyses the reaction succinate + ATP + CoA = succinyl-CoA + ADP + phosphate. It carries out the reaction GTP + succinate + CoA = succinyl-CoA + GDP + phosphate. The protein operates within carbohydrate metabolism; tricarboxylic acid cycle; succinate from succinyl-CoA (ligase route): step 1/1. In terms of biological role, succinyl-CoA synthetase functions in the citric acid cycle (TCA), coupling the hydrolysis of succinyl-CoA to the synthesis of either ATP or GTP and thus represents the only step of substrate-level phosphorylation in the TCA. The beta subunit provides nucleotide specificity of the enzyme and binds the substrate succinate, while the binding sites for coenzyme A and phosphate are found in the alpha subunit. The sequence is that of Succinate--CoA ligase [ADP-forming] subunit beta from Shewanella loihica (strain ATCC BAA-1088 / PV-4).